We begin with the raw amino-acid sequence, 295 residues long: Excinuclease cho (295 aa).

A GIY-YIG domain is found at 33–108 (TRPGVYLFHG…IKEQQPLFNK (76 aa)).

Functionally, incises the DNA at the 3' side of a lesion during nucleotide excision repair. Incises the DNA farther away from the lesion than UvrC. Not able to incise the 5' site of a lesion. In vitro, the incision activity of Cho is UvrA and UvrB dependent. When a lesion remains because UvrC is not able to induce the 3' incision, Cho incises the DNA. Then UvrC makes the 5' incision. The combined action of Cho and UvrC broadens the substrate range of nucleotide excision repair. The protein is Excinuclease cho (cho) of Escherichia coli (strain K12).